Reading from the N-terminus, the 522-residue chain is MASGGGGCSASERLPPPFPGLEPESEGAAGGSEPEAGDSDTEGEDIFTGAAVVSKHQSPKITTSLLPINNGSKENGIHEEQDQEPQDLFADATVELSLDSTQNNQKKVLAKTLISLPPQEATNSSKPQPTYEELEEEEQEDQFDLTVGITDPEKIGDGMNAYVAYKVTTQTSLPLFRSKQFAVKRRFSDFLGLYEKLSEKHSQNGFIVPPPPEKSLIGMTKVKVGKEDSSSAEFLEKRRAALERYLQRIVNHPTMLQDPDVREFLEKEELPRAVGTQTLSGAGLLKMFNKATDAVSKMTIKMNESDIWFEEKLQEVECEEQRLRKLHAVVETLVNHRKELALNTAQFAKSLAMLGSSEDNTALSRALSQLAEVEEKIEQLHQEQANNDFFLLAELLSDYIRLLAIVRAAFDQRMKTWQRWQDAQATLQKKREAEARLLWANKPDKLQQAKDEILEWESRVTQYERDFERISTVVRKEVIRFEKEKSKDFKNHVIKYLETLLYSQQQLAKYWEAFLPEAKAIS.

Disordered regions lie at residues 1–84 (MASG…QDQE) and 115–142 (SLPP…QEDQ). A phosphoserine mark is found at S32 and S39. Positions 35–45 (EAGDSDTEGED) are enriched in acidic residues. Residues T41 and T48 each carry the phosphothreonine modification. The segment covering 55 to 73 (KHQSPKITTSLLPINNGSK) has biased composition (polar residues). 2 positions are modified to phosphoserine: S58 and S72. Positions 132-142 (EELEEEEQEDQ) are enriched in acidic residues. Positions 143–272 (FDLTVGITDP…EFLEKEELPR (130 aa)) constitute a PX domain. The a 1,2-diacyl-sn-glycero-3-phospho-(1D-myo-inositol-3-phosphate) site is built by R186, S188, and K214. S188 carries the phosphoserine modification. N6-acetyllysine is present on K237. R238 contacts a 1,2-diacyl-sn-glycero-3-phospho-(1D-myo-inositol-3-phosphate). S280 is subject to Phosphoserine. The segment at 281 to 298 (GAGLLKMFNKATDAVSKM) is membrane-binding amphipathic helix. In terms of domain architecture, BAR spans 302–522 (MNESDIWFEE…AFLPEAKAIS (221 aa)).

It belongs to the sorting nexin family. Predominantly forms heterodimers with BAR domain-containing sorting nexins SNX5, SNX6 and SNX32; can self-associate to form homodimers. The heterodimers are proposed to self-assemble into helical arrays on the membrane to stabilize and expand local membrane curvature underlying endosomal tubule formation. Thought to be a component of the originally described retromer complex (also called SNX-BAR retromer) which is a pentamer containing the heterotrimeric retromer cargo-selective complex (CSC), also described as vacuolar protein sorting subcomplex (VPS) and a heterodimeric membrane-deforming subcomplex formed between SNX1 or SNX2 and SNX5 or SNX6 (also called SNX-BAR subcomplex); the respective CSC and SNX-BAR subcomplexes associate with low affinity. Interacts with SNX5, SNX6, SNX32, VPS26A, VPS29, VPS35, DRD5, DENND5A, KALRN, RHOG (GDP-bound form). The interaction with SNX2 is reported controversially. Interacts with DNAJC13; prevented by presence of HGS. Interacts with HGS.

It is found in the endosome membrane. The protein localises to the golgi apparatus. The protein resides in the trans-Golgi network membrane. It localises to the early endosome membrane. Its subcellular location is the cell projection. It is found in the lamellipodium. Involved in several stages of intracellular trafficking. Interacts with membranes containing phosphatidylinositol 3-phosphate (PtdIns(3P)) or phosphatidylinositol 3,5-bisphosphate (PtdIns(3,5)P2). Acts in part as component of the retromer membrane-deforming SNX-BAR subcomplex. The SNX-BAR retromer mediates retrograde transport of cargo proteins from endosomes to the trans-Golgi network (TGN) and is involved in endosome-to-plasma membrane transport for cargo protein recycling. The SNX-BAR subcomplex functions to deform the donor membrane into a tubular profile called endosome-to-TGN transport carrier (ETC). Can sense membrane curvature and has in vitro vesicle-to-membrane remodeling activity. Involved in retrograde endosome-to-TGN transport of lysosomal enzyme receptors (IGF2R, M6PR and SORT1) and Shiginella dysenteria toxin stxB. Plays a role in targeting ligand-activated EGFR to the lysosomes for degradation after endocytosis from the cell surface and release from the Golgi. Involvement in retromer-independent endocytic trafficking of P2RY1 and lysosomal degradation of protease-activated receptor-1/F2R. Promotes KALRN- and RHOG-dependent but retromer-independent membrane remodeling such as lamellipodium formation; the function is dependent on GEF activity of KALRN. Required for endocytosis of DRD5 upon agonist stimulation but not for basal receptor trafficking. The protein is Sorting nexin-1 (SNX1) of Homo sapiens (Human).